A 501-amino-acid polypeptide reads, in one-letter code: Glutathione gamma-glutamylcysteinyltransferase 1 (501 aa).

The 221-residue stretch at 1 to 221 (MAMAGLYRRL…GFMLISRPHR (221 aa)) folds into the Peptidase C83 domain. Residues C56, H162, and D180 contribute to the active site.

Belongs to the phytochelatin synthase family. As to expression, expressed in roots, nodules and leaves.

It catalyses the reaction [Glu(-Cys)](n)-Gly + glutathione + H(+) = [Glu(-Cys)](n+1)-Gly + glycine. With respect to regulation, requires cadmium for activity. Also activated in vitro by Zn(2+), Cu(2+), Fe(2+) or Fe(3+) ions, but not by Co(2+) or Ni(2+) ions. In terms of biological role, involved in the synthesis of phytochelatins (PC) and homophytochelatins (hPC), the heavy-metal-binding peptides of plants. In Lotus japonicus (Lotus corniculatus var. japonicus), this protein is Glutathione gamma-glutamylcysteinyltransferase 1 (PCS1).